Reading from the N-terminus, the 246-residue chain is AA9 family lytic polysaccharide monooxygenase D (246 aa).

The signal sequence occupies residues 1-19; it reads MHLLSLLFPVIALIPTVLS. H20 is a binding site for Cu(2+). An intrachain disulfide couples C78 to C196. N-linked (GlcNAc...) asparagine glycosylation is found at N86, N141, and N156. 2 residues coordinate O2: H182 and Q191. Position 193 (Y193) interacts with Cu(2+). N-linked (GlcNAc...) asparagine glycosylation is present at N235.

Belongs to the polysaccharide monooxygenase AA9 family. Cu(2+) is required as a cofactor.

Its subcellular location is the secreted. The enzyme catalyses [(1-&gt;4)-beta-D-glucosyl]n+m + reduced acceptor + O2 = 4-dehydro-beta-D-glucosyl-[(1-&gt;4)-beta-D-glucosyl]n-1 + [(1-&gt;4)-beta-D-glucosyl]m + acceptor + H2O.. In terms of biological role, lytic polysaccharide monooxygenase (LPMO) that depolymerizes crystalline and amorphous polysaccharides via the oxidation of scissile alpha- or beta-(1-4)-glycosidic bonds, yielding C1 and C4 oxidation products. Catalysis by LPMOs requires the reduction of the active-site copper from Cu(II) to Cu(I) by a reducing agent and H(2)O(2) or O(2) as a cosubstrate. The chain is AA9 family lytic polysaccharide monooxygenase D from Botryotinia fuckeliana (strain B05.10) (Noble rot fungus).